The primary structure comprises 348 residues: tRNA N6-adenosine threonylcarbamoyltransferase (348 aa).

Fe cation contacts are provided by His-111 and His-115. Substrate-binding positions include 134–138 (LVSGG), Asp-167, Gly-180, Asp-184, and Asn-279. Asp-307 contacts Fe cation.

This sequence belongs to the KAE1 / TsaD family. The cofactor is Fe(2+).

The protein resides in the cytoplasm. The enzyme catalyses L-threonylcarbamoyladenylate + adenosine(37) in tRNA = N(6)-L-threonylcarbamoyladenosine(37) in tRNA + AMP + H(+). Its function is as follows. Required for the formation of a threonylcarbamoyl group on adenosine at position 37 (t(6)A37) in tRNAs that read codons beginning with adenine. Is involved in the transfer of the threonylcarbamoyl moiety of threonylcarbamoyl-AMP (TC-AMP) to the N6 group of A37, together with TsaE and TsaB. TsaD likely plays a direct catalytic role in this reaction. The protein is tRNA N6-adenosine threonylcarbamoyltransferase of Synechocystis sp. (strain ATCC 27184 / PCC 6803 / Kazusa).